The following is a 245-amino-acid chain: tRNA (guanine-N(1)-)-methyltransferase (245 aa).

S-adenosyl-L-methionine-binding positions include G111 and 131 to 136; that span reads IGDYVL.

The protein belongs to the RNA methyltransferase TrmD family. As to quaternary structure, homodimer.

The protein localises to the cytoplasm. It catalyses the reaction guanosine(37) in tRNA + S-adenosyl-L-methionine = N(1)-methylguanosine(37) in tRNA + S-adenosyl-L-homocysteine + H(+). In terms of biological role, specifically methylates guanosine-37 in various tRNAs. The sequence is that of tRNA (guanine-N(1)-)-methyltransferase from Staphylococcus haemolyticus (strain JCSC1435).